A 487-amino-acid chain; its full sequence is NADH-quinone oxidoreductase subunit N (487 aa).

The next 14 membrane-spanning stretches (helical) occupy residues 8-28 (LIAMLPLLIVGLTVVVVMLSI), 35-55 (FINATLTVIGLNLALLSLYFV), 78-98 (GLVIIASLATSTFAYPWLVGY), 104-124 (EFYLLVLIAALGGILLASANH), 125-145 (LASLFLGIELLTLPLFGLIGY), 159-179 (YMLLSAAASSFLLFGMALLYA), 203-223 (ILAGLGMMIVGLGFKLSLVPF), 235-255 (PAPVSTFLATASKIAIFAVVM), 271-291 (LVLSIIAVASILFGNLMAISQ), 297-317 (LLGYSSIAHLGYLLIALVAVQ), 328-348 (IGVYLAGYLFSSLGAFGVVSL), 376-396 (AVMTVMMLSLAGIPMTLGFIG), 409-428 (LWWLTGAVVLGSAIGLYYYL), and 451-471 (ALTAGGVVVLISAILVLVLGI).

Belongs to the complex I subunit 2 family. NDH-1 is composed of 13 different subunits. Subunits NuoA, H, J, K, L, M, N constitute the membrane sector of the complex.

It localises to the cell inner membrane. It catalyses the reaction a quinone + NADH + 5 H(+)(in) = a quinol + NAD(+) + 4 H(+)(out). Its function is as follows. NDH-1 shuttles electrons from NADH, via FMN and iron-sulfur (Fe-S) centers, to quinones in the respiratory chain. The immediate electron acceptor for the enzyme in this species is believed to be ubiquinone. Couples the redox reaction to proton translocation (for every two electrons transferred, four hydrogen ions are translocated across the cytoplasmic membrane), and thus conserves the redox energy in a proton gradient. The polypeptide is NADH-quinone oxidoreductase subunit N (Yersinia pseudotuberculosis serotype O:1b (strain IP 31758)).